Consider the following 575-residue polypeptide: MAFEGVLQIVATLVLMVAIVPFFGTYMARVFQGESTWLDRVLGPIENLVYRLGGVRPELTMDWWSYARAVLASNAAMFVPVFAVLLLQGSLPLNPNGISGMSWDLALHTAISFLTNTNQQHYSGETGASHLAQMVCFQFLMFTSAATGLAVGIAFIRGLLGKPLGNFYVDLTRSVSRILMPISIAFAVVLLSQGVPQSLGGTTEAQLVDPYRTEQDGKREQVTAQKLVSGPFASMESIKELGENGGGSYGINSAHPYENPNPFTNLLEILLLLAVPTSLIYTFGVLANNKKQGWVLFGTIFVLFVGLVGVAALGEYWGNPTVNALLGSANPNFEGQEVRFGWAQSALFATATTGTMTGAVNAMHDSLTPLAGLVTLFNLCLQVIWGGQGTGIAYILVFLIIAVFLTGLMVGRTPEIFGRKLEKREVALASIIFLVHPVIILVPTAIALAIPGLAGNSNPGFHGLTQVVYEYASAAANNGSGFEGLGDATPWWNLSTSVVLLLGRYAPIVALLALAGGLQRKQPVPETPGTLRTDTVLFGSVTAGTILILGALTFFPVFALGPIAEWIANLAGKTL.

12 consecutive transmembrane segments (helical) span residues 3-23 (FEGVLQIVATLVLMVAIVPFF), 69-89 (AVLASNAAMFVPVFAVLLLQG), 136-156 (CFQFLMFTSAATGLAVGIAFI), 178-198 (ILMPISIAFAVVLLSQGVPQS), 266-286 (LLEILLLLAVPTSLIYTFGVL), 293-313 (GWVLFGTIFVLFVGLVGVAAL), 340-360 (FGWAQSALFATATTGTMTGAV), 367-387 (LTPLAGLVTLFNLCLQVIWGG), 391-411 (GIAYILVFLIIAVFLTGLMVG), 431-451 (IIFLVHPVIILVPTAIALAIP), 498-518 (VVLLLGRYAPIVALLALAGGL), and 543-563 (AGTILILGALTFFPVFALGPI).

This sequence belongs to the KdpA family. As to quaternary structure, the system is composed of three essential subunits: KdpA, KdpB and KdpC.

The protein resides in the cell inner membrane. In terms of biological role, part of the high-affinity ATP-driven potassium transport (or Kdp) system, which catalyzes the hydrolysis of ATP coupled with the electrogenic transport of potassium into the cytoplasm. This subunit binds the periplasmic potassium ions and delivers the ions to the membrane domain of KdpB through an intramembrane tunnel. The protein is Potassium-transporting ATPase potassium-binding subunit of Gloeobacter violaceus (strain ATCC 29082 / PCC 7421).